Reading from the N-terminus, the 94-residue chain is MQIDEKLLSKLEKLSALQITKNRNETIAQLSEIVNFVKKLNELDLDSQEITVSTIKGGAPLRIDEIRNSNVIDEVLDCAPKKQEHFFIVPKIIE.

This sequence belongs to the GatC family. As to quaternary structure, heterotrimer of A, B and C subunits.

The catalysed reaction is L-glutamyl-tRNA(Gln) + L-glutamine + ATP + H2O = L-glutaminyl-tRNA(Gln) + L-glutamate + ADP + phosphate + H(+). It catalyses the reaction L-aspartyl-tRNA(Asn) + L-glutamine + ATP + H2O = L-asparaginyl-tRNA(Asn) + L-glutamate + ADP + phosphate + 2 H(+). Its function is as follows. Allows the formation of correctly charged Asn-tRNA(Asn) or Gln-tRNA(Gln) through the transamidation of misacylated Asp-tRNA(Asn) or Glu-tRNA(Gln) in organisms which lack either or both of asparaginyl-tRNA or glutaminyl-tRNA synthetases. The reaction takes place in the presence of glutamine and ATP through an activated phospho-Asp-tRNA(Asn) or phospho-Glu-tRNA(Gln). The chain is Aspartyl/glutamyl-tRNA(Asn/Gln) amidotransferase subunit C from Campylobacter jejuni subsp. doylei (strain ATCC BAA-1458 / RM4099 / 269.97).